We begin with the raw amino-acid sequence, 234 residues long: Adenosine 5'-phosphosulfate reductase (234 aa).

[4Fe-4S] cluster-binding residues include cysteine 120, cysteine 121, cysteine 203, and cysteine 206. Cysteine 229 functions as the Nucleophile; cysteine thiosulfonate intermediate in the catalytic mechanism.

It belongs to the PAPS reductase family. CysH subfamily. Requires [4Fe-4S] cluster as cofactor.

The protein localises to the cytoplasm. The catalysed reaction is [thioredoxin]-disulfide + sulfite + AMP + 2 H(+) = adenosine 5'-phosphosulfate + [thioredoxin]-dithiol. Its pathway is sulfur metabolism; hydrogen sulfide biosynthesis; sulfite from sulfate. Functionally, catalyzes the formation of sulfite from adenosine 5'-phosphosulfate (APS) using thioredoxin as an electron donor. This Bacillus thuringiensis (strain Al Hakam) protein is Adenosine 5'-phosphosulfate reductase.